Consider the following 246-residue polypeptide: Probable transcriptional regulatory protein WD_0484 (246 aa).

The disordered stretch occupies residues 1-22 (MAGHSQFSNIKHRKGAQDAKRS).

This sequence belongs to the TACO1 family.

It is found in the cytoplasm. This Wolbachia pipientis wMel protein is Probable transcriptional regulatory protein WD_0484.